Reading from the N-terminus, the 414-residue chain is Enolase (414 aa).

Residue Gln-156 coordinates (2R)-2-phosphoglycerate. Residue Glu-200 is the Proton donor of the active site. Asp-236, Glu-281, and Asp-308 together coordinate Mg(2+). The (2R)-2-phosphoglycerate site is built by Lys-333, Arg-362, Ser-363, and Lys-384. The Proton acceptor role is filled by Lys-333.

Belongs to the enolase family. It depends on Mg(2+) as a cofactor.

Its subcellular location is the cytoplasm. The protein localises to the secreted. It localises to the cell surface. The catalysed reaction is (2R)-2-phosphoglycerate = phosphoenolpyruvate + H2O. It functions in the pathway carbohydrate degradation; glycolysis; pyruvate from D-glyceraldehyde 3-phosphate: step 4/5. Its function is as follows. Catalyzes the reversible conversion of 2-phosphoglycerate (2-PG) into phosphoenolpyruvate (PEP). It is essential for the degradation of carbohydrates via glycolysis. The protein is Enolase of Methanosphaera stadtmanae (strain ATCC 43021 / DSM 3091 / JCM 11832 / MCB-3).